Here is a 519-residue protein sequence, read N- to C-terminus: Histidine--tRNA ligase, cytoplasmic (519 aa).

L-histidine-binding positions include 135–137 (DLT), Arg162, Gln178, Asp182, Arg331, and 335–336 (YY).

Belongs to the class-II aminoacyl-tRNA synthetase family. In terms of assembly, homodimer.

It is found in the cytoplasm. It carries out the reaction tRNA(His) + L-histidine + ATP = L-histidyl-tRNA(His) + AMP + diphosphate + H(+). In terms of biological role, catalyzes the ATP-dependent ligation of histidine to the 3'-end of its cognate tRNA, via the formation of an aminoacyl-adenylate intermediate (His-AMP). Plays a role in axon guidance. The protein is Histidine--tRNA ligase, cytoplasmic (hars1) of Takifugu rubripes (Japanese pufferfish).